Reading from the N-terminus, the 409-residue chain is Putative competence-damage inducible protein (409 aa).

Belongs to the CinA family.

The protein is Putative competence-damage inducible protein of Clostridium botulinum (strain Langeland / NCTC 10281 / Type F).